The following is a 70-amino-acid chain: uncharacterized protein (70 aa).

The helical transmembrane segment at 12-32 threads the bilayer; that stretch reads VLFMNFFSVFVCTIGTLFLVF.

It is found in the membrane. This is an uncharacterized protein from Saccharomyces cerevisiae (strain ATCC 204508 / S288c) (Baker's yeast).